The following is a 373-amino-acid chain: Flagellar P-ring protein 1 (373 aa).

The N-terminal stretch at 1–25 is a signal peptide; it reads MKPINTFFSSFLLALTLGLPATSQA.

Belongs to the FlgI family. In terms of assembly, the basal body constitutes a major portion of the flagellar organelle and consists of four rings (L,P,S, and M) mounted on a central rod.

It localises to the periplasm. Its subcellular location is the bacterial flagellum basal body. Assembles around the rod to form the L-ring and probably protects the motor/basal body from shearing forces during rotation. The polypeptide is Flagellar P-ring protein 1 (Vibrio parahaemolyticus serotype O3:K6 (strain RIMD 2210633)).